The following is a 263-amino-acid chain: N-acyl homoserine lactonase AttM (263 aa).

Residues His-103, His-105, Asp-107, His-108, His-180, Asp-202, and His-247 each contribute to the Zn(2+) site.

Belongs to the metallo-beta-lactamase superfamily. Requires Zn(2+) as cofactor.

It catalyses the reaction an N-acyl-L-homoserine lactone + H2O = an N-acyl-L-homoserine + H(+). In Rhizobium radiobacter (Agrobacterium tumefaciens), this protein is N-acyl homoserine lactonase AttM (attM).